Here is a 943-residue protein sequence, read N- to C-terminus: Tyrosine-protein kinase transmembrane receptor ROR2 (943 aa).

Positions 1–33 (MARGSALPRRPLLCIPAVWAAAALLLSVSRTSG) are cleaved as a signal peptide. Residues 34-403 (EVEVLDPNDP…CSPRDSSKMG (370 aa)) lie on the Extracellular side of the membrane. The Ig-like C2-type domain occupies 55–145 (PTLKGYFLNF…VATNGMKTIT (91 aa)). N-linked (GlcNAc...) asparagine glycosylation occurs at asparagine 70. Cystine bridges form between cysteine 83–cysteine 135, cysteine 174–cysteine 239, cysteine 182–cysteine 232, cysteine 223–cysteine 264, cysteine 252–cysteine 300, cysteine 256–cysteine 286, cysteine 316–cysteine 394, cysteine 337–cysteine 377, and cysteine 365–cysteine 389. The FZ domain occupies 169–303 (HEDGFCQPYR…SPDAANCMRI (135 aa)). N-linked (GlcNAc...) asparagine glycosylation occurs at asparagine 188. The region spanning 316-394 (CYNGSGMDYR…RMELCDVPSC (79 aa)) is the Kringle domain. A glycan (N-linked (GlcNAc...) asparagine) is linked at asparagine 318. A helical membrane pass occupies residues 404-424 (ILYILVPSIAIPLVIACLFFL). Over 425–943 (VCMCRNKQKA…VDEAQVQLEA (519 aa)) the chain is Cytoplasmic. A sulfoserine; partial mark is found at serine 469 and serine 471. Positions 473–746 (VRFMEELGED…PRFKDIHSRL (274 aa)) constitute a Protein kinase domain. ATP contacts are provided by residues 479-487 (LGEDRFGKV) and lysine 507. The active-site Proton acceptor is the aspartate 615. Tyrosine 646 carries the post-translational modification Phosphotyrosine; by autocatalysis. Disordered stretches follow at residues 757–796 (SSAQ…APPF) and 850–931 (QVPP…DCDT). Composition is skewed to low complexity over residues 765 to 791 (SNTT…GPKQ) and 857 to 872 (PKPS…TSTG). Arginine 785 is modified (asymmetric dimethylarginine). The span at 873–883 (YVTTAPSNTSM) shows a compositional bias: polar residues.

The protein belongs to the protein kinase superfamily. Tyr protein kinase family. ROR subfamily. In terms of assembly, homodimer; promotes osteogenesis. Binds YWHAB. Interacts with WTIP. Interacts with ROR2. It depends on Mg(2+) as a cofactor.

The protein localises to the cell membrane. It catalyses the reaction L-tyrosyl-[protein] + ATP = O-phospho-L-tyrosyl-[protein] + ADP + H(+). In terms of biological role, tyrosine-protein kinase receptor which may be involved in the early formation of the chondrocytes. It seems to be required for cartilage and growth plate development. Phosphorylates YWHAB, leading to induction of osteogenesis and bone formation. In contrast, has also been shown to have very little tyrosine kinase activity in vitro. May act as a receptor for wnt ligand WNT5A which may result in the inhibition of WNT3A-mediated signaling. In Homo sapiens (Human), this protein is Tyrosine-protein kinase transmembrane receptor ROR2 (ROR2).